The chain runs to 1104 residues: Protein KIBRA (1104 aa).

2 WW domains span residues 6–39 (LPLP…DPRD) and 53–86 (DELP…DPRV). Residues 107 to 193 (LSAQKEIYQV…ELQFKERGFQ (87 aa)) are a coiled coil. At Ser-141 the chain carries Phosphoserine. Disordered stretches follow at residues 429–449 (SMQS…RGSL) and 509–547 (TQKA…SPPC). Residues 527–542 (TPRSMTSLSPRSSLSS) are compositionally biased toward low complexity. Phosphoserine is present on Ser-535. Ser-542 is subject to Phosphoserine; by CDK1. Residues 659-782 (GATRVQIALK…RSGERSTRWY (124 aa)) form the C2 domain. The segment at 822 to 949 (LEKRQEGRSS…DSSTLSKKPP (128 aa)) is disordered. An interaction with histone H3 region spans residues 836-1104 (EGSWTYEEEA…NIPALSADDV (269 aa)). The span at 841 to 862 (YEEEASENEAVAEEEEEGEEDV) shows a compositional bias: acidic residues. 3 positions are modified to phosphoserine: Ser-887, Ser-891, and Ser-919. Residues 916–930 (IIRSKTFSPGPQSQY) show a composition bias toward polar residues. Thr-921 carries the phosphothreonine modification. Ser-923 bears the Phosphoserine; by CDK1 mark. At Ser-939 the chain carries Phosphoserine. Interaction with PRKCZ stretches follow at residues 945 to 988 (SKKP…LDLQ) and 948 to 967 (PPFV…RPSS). A phosphoserine; by PKC/PRKCZ mark is found at Ser-967 and Ser-970. Residues 994–1024 (HSQLTQEISVLKELKEHLEQAKNHGEKELPQ) adopt a coiled-coil conformation. An ADDV motif motif is present at residues 1102 to 1104 (DDV).

This sequence belongs to the WWC family. KIBRA subfamily. In terms of assembly, homodimer. Forms heterodimers with WWC2 and WWC3. Interacts with DDN. Interacts with DYNLL1 and histone H3. The interaction with DYNLL1 is mandatory for the recruitment and transactivation functions of ESR1 or DYNLL1 to the target chromatin and the interaction with histone H3 ensures proper regulatory interaction of WWC1-DYNLL1-ESR1 complexes with target chromatin. Interacts (via WW domains) with DDR1 (via PPxY motif) in a collagen-regulated manner. Interacts with PRKCZ (via the protein kinase domain). Forms a tripartite complex with DDR1 and PRKCZ, but predominantly in the absence of collagen. Interacts (via the ADDV motif) with PATJ (via PDZ domain 8). Interacts (via WW domains) with SYNPO (via PPxY motifs). Interacts with NF2 and SNX4. Interacts with CCDC141; retains AMPAR in the cytosol after internalization. Interacts with DLC1 and PRKCZ. Interacts (via WW domains) with LATS1 and LATS2. Phosphorylation at Ser-542 and Ser-923 by CDK1 in response to spindle damage stress regulates mitotic exit, these two sites are dephosphorylated by CDC14B. In terms of tissue distribution, mammary epithelium.

The protein localises to the cytoplasm. Its subcellular location is the perinuclear region. It is found in the nucleus. The protein resides in the cell projection. It localises to the ruffle membrane. The protein localises to the cytosol. Its function is as follows. Regulator of the Hippo signaling pathway, also known as the Salvador-Warts-Hippo (SWH) pathway. Enhances phosphorylation of LATS1 and YAP1 and negatively regulates cell proliferation and organ growth due to a suppression of the transcriptional activity of YAP1, the major effector of the Hippo pathway. Along with NF2 can synergistically induce the phosphorylation of LATS1 and LATS2 and function in the regulation of Hippo signaling pathway. Acts as a transcriptional coactivator of ESR1 which plays an essential role in DYNLL1-mediated ESR1 transactivation. Modulates directional migration of podocytes. May be associated with memory performance. Regulates collagen-stimulated activation of the ERK/MAPK cascade. Plays an important role in regulating AMPA-selective glutamate receptors (AMPARs) trafficking. The chain is Protein KIBRA (Wwc1) from Mus musculus (Mouse).